A 316-amino-acid polypeptide reads, in one-letter code: Aspartate carbamoyltransferase catalytic subunit (316 aa).

Carbamoyl phosphate is bound by residues Arg66 and Thr67. Residue Lys94 coordinates L-aspartate. The carbamoyl phosphate site is built by Arg116, His146, and Gln149. Arg179 and Arg234 together coordinate L-aspartate. Carbamoyl phosphate is bound by residues Gly275 and Pro276.

The protein belongs to the aspartate/ornithine carbamoyltransferase superfamily. ATCase family. In terms of assembly, heterododecamer (2C3:3R2) of six catalytic PyrB chains organized as two trimers (C3), and six regulatory PyrI chains organized as three dimers (R2).

The catalysed reaction is carbamoyl phosphate + L-aspartate = N-carbamoyl-L-aspartate + phosphate + H(+). It functions in the pathway pyrimidine metabolism; UMP biosynthesis via de novo pathway; (S)-dihydroorotate from bicarbonate: step 2/3. In terms of biological role, catalyzes the condensation of carbamoyl phosphate and aspartate to form carbamoyl aspartate and inorganic phosphate, the committed step in the de novo pyrimidine nucleotide biosynthesis pathway. This chain is Aspartate carbamoyltransferase catalytic subunit, found in Nitrosomonas europaea (strain ATCC 19718 / CIP 103999 / KCTC 2705 / NBRC 14298).